The sequence spans 212 residues: Protein RER1C (212 aa).

At M1 the chain carries N-acetylmethionine. Transmembrane regions (helical) follow at residues 55 to 75, 82 to 102, 135 to 155, and 157 to 177; these read TVPH…IYIV, GFYI…IAFL, EFKF…MTFF, and VFDV…LFFL.

It belongs to the RER1 family.

It is found in the membrane. In terms of biological role, involved in the retrieval of endoplasmic reticulum membrane proteins from the early Golgi compartment. The polypeptide is Protein RER1C (RER1C) (Arabidopsis thaliana (Mouse-ear cress)).